Reading from the N-terminus, the 537-residue chain is Spore coat protein SP70 (537 aa).

A signal peptide spans 1–20 (MRILKLAALSCLLFIAPSLS). The DSCP-N domain occupies 21-140 (INCDGLSKDQ…CQIPATGGGP (120 aa)). Asn-97 carries N-linked (GlcNAc...) asparagine glycosylation. Positions 157-179 (SCDKVNCPNGYICTIVNQLAVCV) constitute a Follistatin-like 1 domain. The disordered stretch occupies residues 183 to 246 (SSSSSSSSTT…GSHTTTGGST (64 aa)). Follistatin-like domains are found at residues 250-272 (TCGNVNCPRGYHCEVRGSQAVCV), 278-296 (SCANVDCGSGYHCKNGECI), 358-380 (TCKTVQCPKGYKCKLYADGPTCV), and 389-415 (TCKDMHCESNGLLCVLTPQKKTDEECC).

Phosphorylated and fucosylated.

This is Spore coat protein SP70 (cotB) from Dictyostelium discoideum (Social amoeba).